The sequence spans 128 residues: Large-conductance mechanosensitive channel (128 aa).

2 helical membrane-spanning segments follow: residues phenylalanine 11–glycine 31 and glycine 70–valine 90.

It belongs to the MscL family. In terms of assembly, homopentamer.

It is found in the cell membrane. Channel that opens in response to stretch forces in the membrane lipid bilayer. May participate in the regulation of osmotic pressure changes within the cell. This chain is Large-conductance mechanosensitive channel, found in Listeria innocua serovar 6a (strain ATCC BAA-680 / CLIP 11262).